The chain runs to 361 residues: Caffeic acid 3-O-methyltransferase 2 (361 aa).

Substrate is bound at residue Met-128–Leu-134. The tract at residues Ala-160–Met-178 is substrate binding. Residues Gly-206, Asp-229, Asp-249, Met-250, and Lys-263 each contribute to the S-adenosyl-L-methionine site. Catalysis depends on His-267, which acts as the Proton acceptor.

This sequence belongs to the class I-like SAM-binding methyltransferase superfamily. Cation-independent O-methyltransferase family. COMT subfamily. Homodimer.

It catalyses the reaction (E)-caffeate + S-adenosyl-L-methionine = (E)-ferulate + S-adenosyl-L-homocysteine + H(+). Its pathway is aromatic compound metabolism; phenylpropanoid biosynthesis. Functionally, catalyzes the conversion of caffeic acid to ferulic acid and of 5-hydroxyferulic acid to sinapic acid. The resulting products may subsequently be converted to the corresponding alcohols that are incorporated into lignins. This chain is Caffeic acid 3-O-methyltransferase 2 (COMT2), found in Ocimum basilicum (Sweet basil).